Reading from the N-terminus, the 205-residue chain is Methylthioribulose-1-phosphate dehydratase (205 aa).

Zn(2+) contacts are provided by His98 and His100.

Belongs to the aldolase class II family. MtnB subfamily. Zn(2+) serves as cofactor.

It catalyses the reaction 5-(methylsulfanyl)-D-ribulose 1-phosphate = 5-methylsulfanyl-2,3-dioxopentyl phosphate + H2O. It participates in amino-acid biosynthesis; L-methionine biosynthesis via salvage pathway; L-methionine from S-methyl-5-thio-alpha-D-ribose 1-phosphate: step 2/6. Functionally, catalyzes the dehydration of methylthioribulose-1-phosphate (MTRu-1-P) into 2,3-diketo-5-methylthiopentyl-1-phosphate (DK-MTP-1-P). The polypeptide is Methylthioribulose-1-phosphate dehydratase (Gluconacetobacter diazotrophicus (strain ATCC 49037 / DSM 5601 / CCUG 37298 / CIP 103539 / LMG 7603 / PAl5)).